Reading from the N-terminus, the 238-residue chain is Splicing regulator RBM11 (238 aa).

In terms of domain architecture, RRM spans 10-87; sequence RTVFVGNLEA…RPINVQYRFG (78 aa). The interval 172–238 is disordered; sequence ALNHSPGPEA…CRKCKKKKRY (67 aa). Residues 202–237 carry the Bipartite nuclear localization signal motif; sequence NKRKRQRPDSDSDSSSEDKRGNEGSQKCRKCKKKKR. A compositionally biased stretch (basic residues) spans 228 to 238; that stretch reads KCRKCKKKKRY.

Homodimer. As to expression, selectively expressed in brain, cerebellum and testis, and to a lower extent in kidney.

It localises to the nucleus. The protein resides in the nucleoplasm. The protein localises to the nucleus speckle. Functionally, tissue-specific splicing factor with potential implication in the regulation of alternative splicing during neuron and germ cell differentiation. Antagonizes SRSF1-mediated BCL-X splicing. May affect the choice of alternative 5' splice sites by binding to specific sequences in exons and antagonizing the SR protein SRSF1. In Mus musculus (Mouse), this protein is Splicing regulator RBM11 (Rbm11).